The chain runs to 397 residues: Alpha-lytic protease (397 aa).

Positions 1–24 (MYVSNHRSRRVARVSVSCLVAALA) are cleaved as a signal peptide. Positions 25-199 (AMSCGAALAA…ESSPGKLQTT (175 aa)) are excised as a propeptide. Cysteine 216 and cysteine 236 are joined by a disulfide. Residues histidine 235 and aspartate 262 each act as charge relay system in the active site. Cystine bridges form between cysteine 300–cysteine 310 and cysteine 336–cysteine 369. The active-site Charge relay system is serine 342.

Belongs to the peptidase S1 family.

The enzyme catalyses Preferential cleavage: Ala-|-Xaa, Val-|-Xaa in bacterial cell walls, elastin and other proteins.. The sequence is that of Alpha-lytic protease (alpha-LP) from Lysobacter enzymogenes.